The primary structure comprises 174 residues: 2-hydroxy-palmitic acid dioxygenase MPO1 (174 aa).

Over 1–23 the chain is Cytoplasmic; that stretch reads MGEGLLDLRSQLGFYKFYHHNPK. Residues 24–44 form a helical membrane-spanning segment; that stretch reads NVLIHSIFVPTILFSGSCMLH. Residues 45–63 lie on the Lumenal side of the membrane; that stretch reads RVKIYQSISLTAVLSVLFS. The helical transmembrane segment at 64-84 threads the bilayer; the sequence is IFYCLLYLPTGLLAGVLLLLL. Over 85 to 98 the chain is Cytoplasmic; that stretch reads NLALIDHRVDLTFK. The helical transmembrane segment at 99–119 threads the bilayer; the sequence is QELGLFTIGWIFQFVGHGVFE. At 120–131 the chain is on the lumenal side; the sequence is KRRPALIDNLVQ. The helical transmembrane segment at 132–152 threads the bilayer; the sequence is SLVLAPYFIMFEFLFKLGFMP. The Cytoplasmic segment spans residues 153–174; sequence RLKATLEHDLEIKQRNLRMQRQ.

The protein belongs to the MPO1 family. The cofactor is Fe(2+).

Its subcellular location is the endoplasmic reticulum membrane. The catalysed reaction is (R)-2-hydroxyhexadecanoate + O2 = pentadecanoate + CO2 + H2O. Dioxygenase that catalyzes the alpha-oxidation of 2-hydroxy fatty acids in an iron-dependent manner. Involved in metabolism of phytosphingosine and is required for proper endoplasmic reticulum stress response. This chain is 2-hydroxy-palmitic acid dioxygenase MPO1, found in Saccharomyces cerevisiae (strain ATCC 204508 / S288c) (Baker's yeast).